Consider the following 660-residue polypeptide: MGKLKKKGQSGQAKNYITRTQAVKKLQLSLPDFRKLCIWKGIYPREPRSRKKVSKSATASTTFYYTKDIQYLLHEPLLQKFRDQKVLEKKISRALGRGDVGDAARLERNAARPDKTGKPRYTLNHVIRERYPTFIDALRDLDDCLSMLFLFANLPSTTAVPAKMIARCERLCLEFEHYLITSHSLRKSFLSIKGIYYQASIQGEDILWLVPYKFNQRVVGDVDFRIMGTFVEFYMTLLGFVNYRLYTAVGLKYPPKFDQLKDDQGAELGAFALEGVNIATNDDTKAITNGEAEHGPDPKVQAEVDKIVQQLRVESDDKASEEGPADDVEGEEKPSDAIDKFEPVAPGGDVLPQPSYSSSDPAQLFSRLTFFLSRETPRQSLEFILRAFGCKRIGWDSVLGEGSFTTDESDPSITHQIVDRPVVQAAMNEEGDGEDNQTSQKVGPNHRYPGRLYVQPQWVWDSVNDEELKSPELYGPGAALPPHLSPFVKPTQGQYDPTIPLEEQQSEGEAIDAELEDANEEAGEESDVENDMDVASDEDEEEEDEEEFDGVSVSEEEEGSEDEEESATLQRQRELEAEISGKSVKGDKKMDAKTKAKLEAKKALERKKKSEAEDLERAKGMLSKKKRKLFEQMQYTNNKKSAEDLKLRQKRRRLEKEKKA.

2 disordered regions span residues 313-358 and 471-660; these read VESD…SYSS and PELY…EKKA. Basic and acidic residues predominate over residues 331–342; sequence EEKPSDAIDKFE. The BRCT domain occupies 360–476; that stretch reads DPAQLFSRLT…ELKSPELYGP (117 aa). Positions 501–659 form a coiled coil; that stretch reads LEEQQSEGEA…KRRRLEKEKK (159 aa). The segment covering 504-566 has biased composition (acidic residues); that stretch reads QQSEGEAIDA…EEGSEDEEES (63 aa). Basic and acidic residues predominate over residues 584–619; the sequence is VKGDKKMDAKTKAKLEAKKALERKKKSEAEDLERAK.

The protein belongs to the pescadillo family. Component of the NOP7 complex, composed of ERB1, NOP7 and YTM1. The complex is held together by ERB1, which interacts with NOP7 via its N-terminal domain and with YTM1 via a high-affinity interaction between the seven-bladed beta-propeller domains of the 2 proteins. The NOP7 complex associates with the 66S pre-ribosome.

It localises to the nucleus. The protein resides in the nucleolus. Its subcellular location is the nucleoplasm. Its function is as follows. Component of the NOP7 complex, which is required for maturation of the 25S and 5.8S ribosomal RNAs and formation of the 60S ribosome. The protein is Pescadillo homolog of Chaetomium globosum (strain ATCC 6205 / CBS 148.51 / DSM 1962 / NBRC 6347 / NRRL 1970) (Soil fungus).